An 804-amino-acid polypeptide reads, in one-letter code: Ribonucleoside-diphosphate reductase large subunit-like protein (804 aa).

Belongs to the ribonucleoside diphosphate reductase large chain family.

It is found in the virion. The protein resides in the host cytoplasm. Does not possess a ribonucleotide reductase activity. Betaherpesviruses probably use another strategy to expand the dNTP pool in a quiescent host cell. In Homo sapiens (Human), this protein is Ribonucleoside-diphosphate reductase large subunit-like protein.